The sequence spans 153 residues: SsrA-binding protein (153 aa).

Residues 131–153 form a disordered region; the sequence is EYDKRDSIRERDDRREMDRAFKR.

This sequence belongs to the SmpB family.

It is found in the cytoplasm. Required for rescue of stalled ribosomes mediated by trans-translation. Binds to transfer-messenger RNA (tmRNA), required for stable association of tmRNA with ribosomes. tmRNA and SmpB together mimic tRNA shape, replacing the anticodon stem-loop with SmpB. tmRNA is encoded by the ssrA gene; the 2 termini fold to resemble tRNA(Ala) and it encodes a 'tag peptide', a short internal open reading frame. During trans-translation Ala-aminoacylated tmRNA acts like a tRNA, entering the A-site of stalled ribosomes, displacing the stalled mRNA. The ribosome then switches to translate the ORF on the tmRNA; the nascent peptide is terminated with the 'tag peptide' encoded by the tmRNA and targeted for degradation. The ribosome is freed to recommence translation, which seems to be the essential function of trans-translation. This is SsrA-binding protein from Parabacteroides distasonis (strain ATCC 8503 / DSM 20701 / CIP 104284 / JCM 5825 / NCTC 11152).